The primary structure comprises 241 residues: 3-deoxy-D-manno-octulosonic acid kinase (241 aa).

The active site involves D171.

This sequence belongs to the protein kinase superfamily. KdkA/RfaP family.

It is found in the cell inner membrane. The enzyme catalyses an alpha-Kdo-(2-&gt;6)-lipid IVA + ATP = a 4-O-phospho-alpha-Kdo-(2-&gt;6)-lipid IVA + ADP + H(+). It participates in bacterial outer membrane biogenesis; LPS core biosynthesis. In terms of biological role, catalyzes the ATP-dependent phosphorylation of the 3-deoxy-D-manno-octulosonic acid (Kdo) residue in Kdo-lipid IV(A) at the 4-OH position. The sequence is that of 3-deoxy-D-manno-octulosonic acid kinase from Haemophilus influenzae (strain 86-028NP).